The chain runs to 212 residues: Penicillin-binding protein activator LpoB (212 aa).

The first 19 residues, 1 to 19 (MTKMHRYAAIAALAIFLSG), serve as a signal peptide directing secretion. Cys-20 carries the N-palmitoyl cysteine lipid modification. Cys-20 carries S-diacylglycerol cysteine lipidation. Residues 28-73 (PVEEVKPAPEQPAQPPQPPVVPSVPTIPQQPGPIEHEDQTGQPAPK) form a disordered region. Positions 36 to 49 (PEQPAQPPQPPVVP) are enriched in pro residues.

This sequence belongs to the LpoB family. In terms of assembly, interacts with PBP1b.

Its subcellular location is the cell outer membrane. Its function is as follows. Regulator of peptidoglycan synthesis that is essential for the function of penicillin-binding protein 1B (PBP1b). This is Penicillin-binding protein activator LpoB from Salmonella typhimurium (strain LT2 / SGSC1412 / ATCC 700720).